Here is a 480-residue protein sequence, read N- to C-terminus: Wax ester synthase/diacylglycerol acyltransferase 7 (480 aa).

Residues 1-193 (MTYGEEEPVS…LRSIFTIGST (193 aa)) are Cytoplasmic-facing. Histidine 135 functions as the Proton acceptor in the catalytic mechanism. Residues 194-214 (MRLLWNTTIDMLLLLATVLFL) traverse the membrane as a helical segment. The Lumenal portion of the chain corresponds to 215-329 (KDTKTPLKAG…VKDSKCRWGN (115 aa)). Asparagine 252 carries N-linked (GlcNAc...) asparagine glycosylation. A helical transmembrane segment spans residues 330-350 (YFSFIFLPFTIGLQTDPLVYL). Residues 351-365 (KMSKSMMARKKHSYH) are Cytoplasmic-facing. Residues 366-386 (AALVYFIIKIVLKVFGAKAAA) form a helical membrane-spanning segment. Topologically, residues 387–480 (ELFDRPVRNT…KASLCERGLL (94 aa)) are lumenal. An N-linked (GlcNAc...) asparagine glycan is attached at asparagine 395.

In the N-terminal section; belongs to the long-chain O-acyltransferase family. Expressed in roots, stems, leaves, flowers and siliques.

Its subcellular location is the cell membrane. The protein localises to the endoplasmic reticulum membrane. It localises to the golgi apparatus membrane. It carries out the reaction an acyl-CoA + a 1,2-diacyl-sn-glycerol = a triacyl-sn-glycerol + CoA. It catalyses the reaction a long chain fatty alcohol + a fatty acyl-CoA = a wax ester + CoA. It functions in the pathway glycerolipid metabolism; triacylglycerol biosynthesis. It participates in lipid metabolism. In terms of biological role, bifunctional wax ester synthase/diacylglycerol acyltransferase that uses acyl-CoAs with 14, 16 and 18 carbons as substrates, preferably in combination with 16:0ol alcohol. Involved in cuticular wax biosynthesis. The polypeptide is Wax ester synthase/diacylglycerol acyltransferase 7 (Arabidopsis thaliana (Mouse-ear cress)).